The primary structure comprises 238 residues: Aspartate/glutamate leucyltransferase (238 aa).

It belongs to the R-transferase family. Bpt subfamily.

It is found in the cytoplasm. It catalyses the reaction N-terminal L-glutamyl-[protein] + L-leucyl-tRNA(Leu) = N-terminal L-leucyl-L-glutamyl-[protein] + tRNA(Leu) + H(+). The enzyme catalyses N-terminal L-aspartyl-[protein] + L-leucyl-tRNA(Leu) = N-terminal L-leucyl-L-aspartyl-[protein] + tRNA(Leu) + H(+). In terms of biological role, functions in the N-end rule pathway of protein degradation where it conjugates Leu from its aminoacyl-tRNA to the N-termini of proteins containing an N-terminal aspartate or glutamate. This is Aspartate/glutamate leucyltransferase from Shewanella sp. (strain ANA-3).